The primary structure comprises 72 residues: Translation initiation factor IF-1 (72 aa).

The S1-like domain maps to 1 to 72 (MAKEDNIEMQ…TKGRIVFRAR (72 aa)).

This sequence belongs to the IF-1 family. As to quaternary structure, component of the 30S ribosomal translation pre-initiation complex which assembles on the 30S ribosome in the order IF-2 and IF-3, IF-1 and N-formylmethionyl-tRNA(fMet); mRNA recruitment can occur at any time during PIC assembly.

The protein resides in the cytoplasm. In terms of biological role, one of the essential components for the initiation of protein synthesis. Stabilizes the binding of IF-2 and IF-3 on the 30S subunit to which N-formylmethionyl-tRNA(fMet) subsequently binds. Helps modulate mRNA selection, yielding the 30S pre-initiation complex (PIC). Upon addition of the 50S ribosomal subunit IF-1, IF-2 and IF-3 are released leaving the mature 70S translation initiation complex. The sequence is that of Translation initiation factor IF-1 from Shewanella baltica (strain OS155 / ATCC BAA-1091).